Consider the following 122-residue polypeptide: MALNIENIIAEIKEASILELNDLVKAIEEEFGVTAAAPVAAAADGAADAGAAKDSFDVELTSAGDKKVGVIKVVREITGEGLKEAKAIVDGAPSVIKEGVSAAEAEEIKAKLEEAGASVTLK.

This sequence belongs to the bacterial ribosomal protein bL12 family. As to quaternary structure, homodimer. Part of the ribosomal stalk of the 50S ribosomal subunit. Forms a multimeric L10(L12)X complex, where L10 forms an elongated spine to which 2 to 4 L12 dimers bind in a sequential fashion. Binds GTP-bound translation factors.

Functionally, forms part of the ribosomal stalk which helps the ribosome interact with GTP-bound translation factors. Is thus essential for accurate translation. The chain is Large ribosomal subunit protein bL12 from Streptococcus thermophilus (strain ATCC BAA-491 / LMD-9).